The chain runs to 242 residues: Uridylate kinase (242 aa).

11 to 14 (KLSG) provides a ligand contact to ATP. The involved in allosteric activation by GTP stretch occupies residues 19-24 (GDKGVG). Gly53 is a binding site for UMP. Residues Gly54 and Arg58 each coordinate ATP. UMP contacts are provided by residues Asp73 and 134–141 (IGSPYFST). Residues Asn162, Tyr168, and Asp171 each contribute to the ATP site.

The protein belongs to the UMP kinase family. As to quaternary structure, homohexamer.

Its subcellular location is the cytoplasm. The enzyme catalyses UMP + ATP = UDP + ADP. It participates in pyrimidine metabolism; CTP biosynthesis via de novo pathway; UDP from UMP (UMPK route): step 1/1. Allosterically activated by GTP. Inhibited by UTP. Its function is as follows. Catalyzes the reversible phosphorylation of UMP to UDP. This Streptococcus agalactiae serotype Ia (strain ATCC 27591 / A909 / CDC SS700) protein is Uridylate kinase.